A 186-amino-acid polypeptide reads, in one-letter code: Peptidyl-tRNA hydrolase (186 aa).

Tyrosine 14 is a tRNA binding site. Histidine 19 (proton acceptor) is an active-site residue. Positions 64, 66, and 112 each coordinate tRNA.

It belongs to the PTH family. Monomer.

It localises to the cytoplasm. The enzyme catalyses an N-acyl-L-alpha-aminoacyl-tRNA + H2O = an N-acyl-L-amino acid + a tRNA + H(+). Hydrolyzes ribosome-free peptidyl-tRNAs (with 1 or more amino acids incorporated), which drop off the ribosome during protein synthesis, or as a result of ribosome stalling. Its function is as follows. Catalyzes the release of premature peptidyl moieties from peptidyl-tRNA molecules trapped in stalled 50S ribosomal subunits, and thus maintains levels of free tRNAs and 50S ribosomes. This is Peptidyl-tRNA hydrolase from Geobacillus thermodenitrificans (strain NG80-2).